The following is a 405-amino-acid chain: Lipase lipl-1 (405 aa).

The first 20 residues, 1–20 (MRSWSTVMLAVLATAATVFG), serve as a signal peptide directing secretion. A glycan (N-linked (GlcNAc...) asparagine) is linked at Asn-66. Ser-169 functions as the Nucleophile in the catalytic mechanism. An N-linked (GlcNAc...) asparagine glycan is attached at Asn-273. Residues Asp-344 and His-376 each act as charge relay system in the active site.

The protein belongs to the AB hydrolase superfamily. Lipase family.

It is found in the secreted. The protein resides in the lysosome lumen. Lipase that, together with lipl-3, plays a role in the response to nutrient deprivation by controlling lipid metabolism. Specifically, involved in the breakdown of lipids during lipophagy, a process during which lipids contained in lipid droplets that have been delivered to lysosomes by autophagy are degraded. The polypeptide is Lipase lipl-1 (Caenorhabditis elegans).